Reading from the N-terminus, the 365-residue chain is S-adenosylmethionine:tRNA ribosyltransferase-isomerase (365 aa).

This sequence belongs to the QueA family. In terms of assembly, monomer.

Its subcellular location is the cytoplasm. It carries out the reaction 7-aminomethyl-7-carbaguanosine(34) in tRNA + S-adenosyl-L-methionine = epoxyqueuosine(34) in tRNA + adenine + L-methionine + 2 H(+). The protein operates within tRNA modification; tRNA-queuosine biosynthesis. Functionally, transfers and isomerizes the ribose moiety from AdoMet to the 7-aminomethyl group of 7-deazaguanine (preQ1-tRNA) to give epoxyqueuosine (oQ-tRNA). In Prochlorococcus marinus (strain NATL2A), this protein is S-adenosylmethionine:tRNA ribosyltransferase-isomerase.